The following is a 468-amino-acid chain: MGRVSSLALALLLPAVQAQQTLWGQCGGIGWTGPTNCVAGAACSTQNPYYAQCLPGTATTSTTLTTTTRVTTTTTSTTSKSSSTGSTTTTKSTGTTTTSGSSTTITSAPSGNPFSGYQLYANPYYSSEVHTLAMPSLASSLLPAASAAAKVPSFTWLDTAAKVPTMGTYLADIKAKNAAGANPPIAAQFVVYDLPDRDCAALASNGEYSIANGGVANYKKYIDAIRAQLLNYPDVHTILVIEPDSLANLVTNLNVAKCANAQSAYLECVNYALIQLNLPNVAMYIDAGHAGWLGWPANIGPAAQLFAGVYKDAGAPAALRGLATNVANYNAFSISTCPSYTSGDANCDENRYINAIAPLLKDQGWDAHFIVDTGRNGVQPTKQNAWGDWCNVIGTGFGVRPTTNTGNSLVDAFVWVKPGGESDGTSDSSSARYDAHCGYSDALQPAPEAGTWFQAYFEQLLKNANPAF.

Residues 1 to 18 form the signal peptide; it reads MGRVSSLALALLLPAVQA. One can recognise a CBM1 domain in the interval 19–54; that stretch reads QQTLWGQCGGIGWTGPTNCVAGAACSTQNPYYAQCL. Intrachain disulfides connect Cys26-Cys43 and Cys37-Cys53. Residues 57–106 are thr-rich linker; the sequence is TATTSTTLTTTTRVTTTTTSTTSKSSSTGSTTTTKSTGTTTTSGSSTTIT. Residues 68–107 form a disordered region; that stretch reads TRVTTTTTSTTSKSSSTGSTTTTKSTGTTTTSGSSTTITS. The interval 107 to 468 is catalytic; sequence SAPSGNPFSG…QLLKNANPAF (362 aa). Asp198 is a catalytic residue. 2 cysteine pairs are disulfide-bonded: Cys199–Cys258 and Cys390–Cys437. Asp244 acts as the Proton donor in catalysis. The Nucleophile role is filled by Asp423.

It belongs to the glycosyl hydrolase 6 (cellulase B) family.

Its subcellular location is the secreted. The catalysed reaction is Hydrolysis of (1-&gt;4)-beta-D-glucosidic linkages in cellulose and cellotetraose, releasing cellobiose from the non-reducing ends of the chains.. Its function is as follows. The biological conversion of cellulose to glucose generally requires three types of hydrolytic enzymes: (1) Endoglucanases which cut internal beta-1,4-glucosidic bonds; (2) Exocellobiohydrolases that cut the disaccharide cellobiose from the non-reducing end of the cellulose polymer chain; (3) Beta-1,4-glucosidases which hydrolyze the cellobiose and other short cello-oligosaccharides to glucose. The polypeptide is Probable 1,4-beta-D-glucan cellobiohydrolase C (cbhC) (Aspergillus terreus (strain NIH 2624 / FGSC A1156)).